Consider the following 181-residue polypeptide: UPF0398 protein lmo1889 (181 aa).

The protein belongs to the UPF0398 family.

The chain is UPF0398 protein lmo1889 from Listeria monocytogenes serovar 1/2a (strain ATCC BAA-679 / EGD-e).